The chain runs to 223 residues: uncharacterized protein (223 aa).

A Response regulatory domain is found at 5–116 (RILIVEDDVM…ELLLRMRNML (112 aa)). The residue at position 52 (aspartate 52) is a 4-aspartylphosphate. The ompR/PhoB-type DNA-binding region spans 121-219 (GTFTQIKHLY…IYGEGYRLNT (99 aa)).

In terms of processing, phosphorylated by YbdK.

It localises to the cytoplasm. Its function is as follows. Member of the two-component regulatory system YbdK/YbdJ. This is an uncharacterized protein from Bacillus subtilis (strain 168).